Consider the following 290-residue polypeptide: Ribosomal RNA small subunit methyltransferase A (290 aa).

The S-adenosyl-L-methionine site is built by H37, V39, G64, E85, D115, and N132.

Belongs to the class I-like SAM-binding methyltransferase superfamily. rRNA adenine N(6)-methyltransferase family. RsmA subfamily.

It localises to the cytoplasm. The enzyme catalyses adenosine(1518)/adenosine(1519) in 16S rRNA + 4 S-adenosyl-L-methionine = N(6)-dimethyladenosine(1518)/N(6)-dimethyladenosine(1519) in 16S rRNA + 4 S-adenosyl-L-homocysteine + 4 H(+). Functionally, specifically dimethylates two adjacent adenosines (A1518 and A1519) in the loop of a conserved hairpin near the 3'-end of 16S rRNA in the 30S particle. May play a critical role in biogenesis of 30S subunits. The protein is Ribosomal RNA small subunit methyltransferase A of Acidothermus cellulolyticus (strain ATCC 43068 / DSM 8971 / 11B).